We begin with the raw amino-acid sequence, 320 residues long: Ferrochelatase (320 aa).

Fe cation contacts are provided by His194 and Glu275.

This sequence belongs to the ferrochelatase family. Monomer.

It is found in the cytoplasm. It catalyses the reaction heme b + 2 H(+) = protoporphyrin IX + Fe(2+). Its pathway is porphyrin-containing compound metabolism; protoheme biosynthesis; protoheme from protoporphyrin-IX: step 1/1. Functionally, catalyzes the ferrous insertion into protoporphyrin IX. The protein is Ferrochelatase of Salmonella typhi.